The chain runs to 196 residues: Large ribosomal subunit protein uL11m (196 aa).

Belongs to the universal ribosomal protein uL11 family. As to quaternary structure, component of the mitochondrial ribosome large subunit (39S) which comprises a 16S rRNA and about 50 distinct proteins.

It localises to the mitochondrion. This Drosophila melanogaster (Fruit fly) protein is Large ribosomal subunit protein uL11m (mRpL11).